Consider the following 440-residue polypeptide: tRNA(Ile)-lysidine synthase (440 aa).

13–18 (SGGADS) contributes to the ATP binding site.

This sequence belongs to the tRNA(Ile)-lysidine synthase family.

Its subcellular location is the cytoplasm. The enzyme catalyses cytidine(34) in tRNA(Ile2) + L-lysine + ATP = lysidine(34) in tRNA(Ile2) + AMP + diphosphate + H(+). In terms of biological role, ligates lysine onto the cytidine present at position 34 of the AUA codon-specific tRNA(Ile) that contains the anticodon CAU, in an ATP-dependent manner. Cytidine is converted to lysidine, thus changing the amino acid specificity of the tRNA from methionine to isoleucine. In Solibacter usitatus (strain Ellin6076), this protein is tRNA(Ile)-lysidine synthase.